Consider the following 67-residue polypeptide: Neurotoxin Cex9 (67 aa).

The 65-residue stretch at 1–65 folds into the LCN-type CS-alpha/beta domain; the sequence is KDGYPVEVTG…TWPLPNKSCG (65 aa). Cystine bridges form between C11–C64, C15–C40, C24–C45, and C28–C47. C64 bears the Cysteine amide mark. Positions 65–67 are excised as a propeptide; it reads GKK.

The protein belongs to the long (4 C-C) scorpion toxin superfamily. Sodium channel inhibitor family. Beta subfamily. In terms of tissue distribution, expressed by the venom gland.

It is found in the secreted. In terms of biological role, beta toxins bind voltage-independently at site-4 of sodium channels (Nav) and shift the voltage of activation toward more negative potentials thereby affecting sodium channel activation and promoting spontaneous and repetitive firing. In Centruroides exilicauda (Bark scorpion), this protein is Neurotoxin Cex9.